We begin with the raw amino-acid sequence, 372 residues long: Methylthioribose-1-phosphate isomerase (372 aa).

Aspartate 252 (proton donor) is an active-site residue.

The protein belongs to the eIF-2B alpha/beta/delta subunits family. MtnA subfamily.

It localises to the cytoplasm. The protein resides in the nucleus. It carries out the reaction 5-(methylsulfanyl)-alpha-D-ribose 1-phosphate = 5-(methylsulfanyl)-D-ribulose 1-phosphate. Its pathway is amino-acid biosynthesis; L-methionine biosynthesis via salvage pathway; L-methionine from S-methyl-5-thio-alpha-D-ribose 1-phosphate: step 1/6. In terms of biological role, catalyzes the interconversion of methylthioribose-1-phosphate (MTR-1-P) into methylthioribulose-1-phosphate (MTRu-1-P). The sequence is that of Methylthioribose-1-phosphate isomerase from Yarrowia lipolytica (strain CLIB 122 / E 150) (Yeast).